A 171-amino-acid chain; its full sequence is MAGSLVESEALQMGVRRLSSPLTSPVQAEVYFPRLTVPFCGHIKGGMRPGKKILIMGIVNLEPKSFDIRLTCGDSEDPAADIAIELRAEFADKQLLRNACVSGKWGEEESAIPYFPFIADQPFRVEIHCEHPRLRIFVDGHQLFDFYHRVETLSAINTIKINGDLQLTKLG.

A Galectin domain is found at 38 to 170 (PFCGHIKGGM…INGDLQLTKL (133 aa)).

In terms of biological role, does not bind lactose, and may not bind carbohydrates. This Xenopus tropicalis (Western clawed frog) protein is Galectin-related protein (lgalsl).